Consider the following 312-residue polypeptide: Very-long-chain 3-oxoacyl-CoA reductase (312 aa).

The helical transmembrane segment at 4-24 (ALPAAGFLYWVGASTIAYLTL) threads the bilayer. 50 to 79 (GEWAVVTGGTDGIGKSYAEELAKRGMKIVL) is a binding site for NADP(+). The next 2 membrane-spanning stretches (helical) occupy residues 182–202 (GVILNISSASGMLPVPLLTVY) and 271–291 (GYVIHAIMGSINSILPRWIYF). Serine 189 is a binding site for substrate. The Proton acceptor role is filled by tyrosine 202. The short motif at 308-312 (KTKKN) is the Di-lysine motif element.

It belongs to the short-chain dehydrogenases/reductases (SDR) family. 17-beta-HSD 3 subfamily.

Its subcellular location is the endoplasmic reticulum membrane. The catalysed reaction is a very-long-chain (3R)-3-hydroxyacyl-CoA + NADP(+) = a very-long-chain 3-oxoacyl-CoA + NADPH + H(+). The enzyme catalyses 17beta-estradiol + NAD(+) = estrone + NADH + H(+). It catalyses the reaction 17beta-estradiol + NADP(+) = estrone + NADPH + H(+). It carries out the reaction 3-oxooctadecanoyl-CoA + NADPH + H(+) = (3R)-hydroxyoctadecanoyl-CoA + NADP(+). The catalysed reaction is (7Z,10Z,13Z,16Z)-3-oxodocosatetraenoyl-CoA + NADPH + H(+) = (3R)-hydroxy-(7Z,10Z,13Z,16Z)-docosatetraenoyl-CoA + NADP(+). The enzyme catalyses 3-oxo-(7Z,10Z,13Z,16Z,19Z)-docosapentaenoyl-CoA + NADPH + H(+) = (3R)-hydroxy-(7Z,10Z,13Z,16Z,19Z)-docosapentaenoyl-CoA + NADP(+). It catalyses the reaction (8Z,11Z,14Z)-3-oxoeicosatrienoyl-CoA + NADPH + H(+) = (3R)-hydroxy-(8Z,11Z,14Z)-eicosatrienoyl-CoA + NADP(+). It functions in the pathway lipid metabolism; fatty acid biosynthesis. The protein operates within steroid biosynthesis; estrogen biosynthesis. Catalyzes the second of the four reactions of the long-chain fatty acids elongation cycle. This endoplasmic reticulum-bound enzymatic process, allows the addition of two carbons to the chain of long- and very long-chain fatty acids/VLCFAs per cycle. This enzyme has a 3-ketoacyl-CoA reductase activity, reducing 3-ketoacyl-CoA to 3-hydroxyacyl-CoA, within each cycle of fatty acid elongation. Thereby, it may participate in the production of VLCFAs of different chain lengths that are involved in multiple biological processes as precursors of membrane lipids and lipid mediators. May also catalyze the transformation of estrone (E1) into estradiol (E2) and play a role in estrogen formation. This is Very-long-chain 3-oxoacyl-CoA reductase from Rattus norvegicus (Rat).